Here is a 134-residue protein sequence, read N- to C-terminus: Small ribosomal subunit protein uS8 (134 aa).

It belongs to the universal ribosomal protein uS8 family. In terms of assembly, part of the 30S ribosomal subunit. Contacts proteins S5 and S12.

One of the primary rRNA binding proteins, it binds directly to 16S rRNA central domain where it helps coordinate assembly of the platform of the 30S subunit. The sequence is that of Small ribosomal subunit protein uS8 from Thermosipho melanesiensis (strain DSM 12029 / CIP 104789 / BI429).